We begin with the raw amino-acid sequence, 2112 residues long: MIEEQRTMSVEGADQQSEKLFHYLKKVAVELDETRARLREYEQRATEPVAVVGIGCRFPGGVDGPDGLWDVVSAGRDVVSEFPTDRGWDVEGLYDPDPDAEGKTYTRWGAFLDDATGFDAGFFGIAPSEVLAMDPQQRLMLEVSWEALEHAGIDPLSLRGSATGVYTGIFAASYGNRDTGGLQGYGLTGTSISVASGRVSYVLGLQGPAVSVDTACSSSLVAIHWAMSSLRSGECDLALAGGVTVMGLPSIFVGFSRQRGLAADGRCKAFAAAADGTGWGEGAGVVVLERLSDARRLGHSVLAVVRGSAVNQDGASNGLTAPNGLAQQRVIQAALANAGLSAADVDVVEAHGTATTLGDPIEAQALLSTYGQGRPAEQPLWVGSIKSNMGHTQAAAGVAGVIKMVQAMRHGVMPATLHVDEPSPRVDWTSGAVSVLTEAREWSVDGRPRRAAVSSFGISGTNAHLILEEAPVPAPAEAPVEASESTGGPRPSMVPWVISARSAEALTAQAGRLMAHVQANPGLDPIDVGCSLASRSVFEHRAVVVGASREQLIAGLAGLAAGEPGAGVAVGQPGSVGKTVVVFPGQGAQRIGMGRELYGELPVFAQAFDAVADELDRHLRLPLRDVIWGADADLLDSTEFAQPALFAVEVASFAVLRDWGVLPDFVMGHSVGELAAAHAAGVLTLADAAMLVVARGRLMQALPAGGAMVAVAASEDEVEPLLGEGVGIAAINAPESVVISGAQAAANAIADRFAAQGRRVHQLAVSHAFHSPLMEPMLEEFARVAARVQAREPQLGLVSNVTGELAGPDFGSAQYWVDHVRRPVRFADSARHLQTLGATHFIEAGPGSGLTGSIEQSLAPAEAMVVSMLGKDRPELASALGAAGQVFTTGVPVQWSAVFAGSGGRRVQLPTYAFQRRRFWETPGADGPADAAGLGLGATEHALLGAVVERPDSDEVVLTGRLSLADQPWLADHVVNGVVLFPGAGFVELVIRAGDEVGCALIEELVLAAPLVMHPGVGVQVQVVVGAADESGHRAVSVYSRGDQSQGWLLNAEGMLGVAAAETPMDLSVWPPEGAESVDISDGYAQLAERGYAYGPAFQGLVAIWRRGSELFAEVVAPGEAGVAVDRMGMHPAVLDAVLHALGLAVEKTQASTETRLPFCWRGVSLHAGGAGRVRARFASAGADAISVDVCDATGLPVLTVRSLVTRPITAEQLRAAVTAAGGASDQGPLEVVWSPISVVSGGANGSAPPAPVSWADFCAGSDGDASVVVWELESAGGQASSVVGSVYAATHTALEVLQSWLGADRAATLVVLTHGGVGLAGEDISDLAAAAVWGMARSAQAENPGRIVLIDTDAAVDASVLAGVGEPQLLVRGGTVHAPRLSPAPALLALPAAESAWRLAAGGGGTLEDLVIQPCPEVQAPLQAGQVRVAVAAVGVNFRDVVAALGMYPGQAPPLGAEGAGVVLETGPEVTDLAVGDAVMGFLGGAGPLAVVDQQLVTRVPQGWSFAQAAAVPVVFLTAWYGLADLAEIKAGESVLIHAGTGGVGMAAVQLARQWGVEVFVTASRGKWDTLRAMGFDDDHIGDSRTCEFEEKFLAVTEGRGVDVVLDSLAGEFVDASLRLLVRGGRFLEMGKTDIRDAQEIAANYPGVQYRAFDLSEAGPARMQEMLAEVRELFDTRELHRLPVTTWDVRCAPAAFRFMSQARHIGKVVLTMPSALADRLADGTVVITGATGAVGGVLARHLVGAYGVRHLVLASRRGDRAEGAAELAADLTEAGAKGQVVACDVADRAAVAGLFAQLSREYPPVRGVIHAAGVLDDAVITSLTPDRIDTVLRAKVDAAWNLHQATSDLDLSMFVLCSSIAATVGSPGQGNYSAANAFLDGLAAHRQAAGLAGISLAWGLWEQPGGMTAHLSSRDLARMSRSGLAPMSPAEAVELFDAALAIDHPLAVATLLDRAALDARAQAGALPALFSGLARRPRRRQIDDTGDATSSKSALAQRLHGLAADEQLELLVGLVCLQAAAVLGRPSAEDVDPDTEFGDLGFDSLTAVELRNRLKTATGLTLPPTVIFDHPTPTAVAEYVAQQMSGSRPTESGDPTSQVVEPAAAEVSVHA.

The Ketosynthase family 3 (KS3) domain occupies 46–469 (TEPVAVVGIG…GTNAHLILEE (424 aa)). Residues Cys-216, His-351, and His-391 each act as for beta-ketoacyl synthase activity in the active site. Residues 579–893 (TVVVFPGQGA…GQVFTTGVPV (315 aa)) are acyltransferase. The active-site For acyltransferase activity is the Ser-670. Positions 941 to 1063 (HALLGAVVER…GMLGVAAAET (123 aa)) are N-terminal hotdog fold. The dehydratase stretch occupies residues 941-1101 (HALLGAVVER…YAYGPAFQGL (161 aa)). The PKS/mFAS DH domain occupies 941 to 1215 (HALLGAVVER…TRPITAEQLR (275 aa)). The active-site Proton acceptor; for dehydratase activity is His-973. The C-terminal hotdog fold stretch occupies residues 1075 to 1215 (AESVDISDGY…TRPITAEQLR (141 aa)). The Proton donor; for dehydratase activity role is filled by Asp-1136. Positions 1406-1711 (GTLEDLVIQP…QARHIGKVVL (306 aa)) are enoylreductase. NADP(+) is bound by residues 1536 to 1553 (VLIH…VQLA) and 1725 to 1740 (TVVI…GVLA). The beta-ketoacyl reductase stretch occupies residues 1724–1905 (GTVVITGATG…SLAWGLWEQP (182 aa)). The Carrier domain occupies 2010-2085 (ELLVGLVCLQ…AVAEYVAQQM (76 aa)). At Ser-2045 the chain carries O-(pantetheine 4'-phosphoryl)serine. The segment covering 2084–2100 (QMSGSRPTESGDPTSQV) has biased composition (polar residues). Residues 2084–2112 (QMSGSRPTESGDPTSQVVEPAAAEVSVHA) are disordered.

This sequence belongs to the thiolase-like superfamily. Beta-ketoacyl-ACP synthases family. Requires pantetheine 4'-phosphate as cofactor.

The enzyme catalyses a fatty acyl-[ACP] + malonyl-[ACP] + H(+) = a 3-oxoacyl-[ACP] + holo-[ACP] + CO2. It participates in lipid metabolism; fatty acid biosynthesis. In terms of biological role, catalyzes the elongation by iterative transfer of p-hydroxybenzoyl group from FadD22 (pHBA-S-FAdD22) to form p-hydroxyphenylalkanoate (pHPA) intermediates during phenolphthiocerol (PPOL) biosynthesis. PPOL is an important intermediate in the biosynthesis of phenolic glycolipid (mycosid B). This chain is Phenolphthiocerol synthesis polyketide synthase type I Pks15/1 (pks15/1), found in Mycobacterium bovis (strain ATCC BAA-935 / AF2122/97).